The primary structure comprises 101 residues: Small ribosomal subunit protein eS24 (101 aa).

It belongs to the eukaryotic ribosomal protein eS24 family.

This chain is Small ribosomal subunit protein eS24, found in Methanosarcina acetivorans (strain ATCC 35395 / DSM 2834 / JCM 12185 / C2A).